We begin with the raw amino-acid sequence, 61 residues long: Small ribosomal subunit protein uS14B (61 aa).

Cys-24, Cys-27, Cys-40, and Cys-43 together coordinate Zn(2+).

The protein belongs to the universal ribosomal protein uS14 family. Zinc-binding uS14 subfamily. In terms of assembly, part of the 30S ribosomal subunit. Contacts proteins S3 and S10. Requires Zn(2+) as cofactor.

Binds 16S rRNA, required for the assembly of 30S particles and may also be responsible for determining the conformation of the 16S rRNA at the A site. This Shouchella clausii (strain KSM-K16) (Alkalihalobacillus clausii) protein is Small ribosomal subunit protein uS14B.